A 219-amino-acid chain; its full sequence is uncharacterized protein (219 aa).

2 helical membrane-spanning segments follow: residues 8-28 (MILF…TLSV) and 194-214 (GIPG…GLLF).

Its subcellular location is the cell membrane. This is an uncharacterized protein from Archaeoglobus fulgidus (strain ATCC 49558 / DSM 4304 / JCM 9628 / NBRC 100126 / VC-16).